Consider the following 119-residue polypeptide: Ribonuclease P protein component (119 aa).

This sequence belongs to the RnpA family. Consists of a catalytic RNA component (M1 or rnpB) and a protein subunit.

The enzyme catalyses Endonucleolytic cleavage of RNA, removing 5'-extranucleotides from tRNA precursor.. Functionally, RNaseP catalyzes the removal of the 5'-leader sequence from pre-tRNA to produce the mature 5'-terminus. It can also cleave other RNA substrates such as 4.5S RNA. The protein component plays an auxiliary but essential role in vivo by binding to the 5'-leader sequence and broadening the substrate specificity of the ribozyme. This chain is Ribonuclease P protein component, found in Edwardsiella ictaluri (strain 93-146).